Here is a 580-residue protein sequence, read N- to C-terminus: 2-succinyl-5-enolpyruvyl-6-hydroxy-3-cyclohexene-1-carboxylate synthase (580 aa).

The interval 178–199 (LEPTPMPGDLTEPPAAAQPRDD) is disordered.

The protein belongs to the TPP enzyme family. MenD subfamily. In terms of assembly, homodimer. The cofactor is Mg(2+). It depends on Mn(2+) as a cofactor. Thiamine diphosphate is required as a cofactor.

It catalyses the reaction isochorismate + 2-oxoglutarate + H(+) = 5-enolpyruvoyl-6-hydroxy-2-succinyl-cyclohex-3-ene-1-carboxylate + CO2. It functions in the pathway quinol/quinone metabolism; 1,4-dihydroxy-2-naphthoate biosynthesis; 1,4-dihydroxy-2-naphthoate from chorismate: step 2/7. The protein operates within quinol/quinone metabolism; menaquinone biosynthesis. Its function is as follows. Catalyzes the thiamine diphosphate-dependent decarboxylation of 2-oxoglutarate and the subsequent addition of the resulting succinic semialdehyde-thiamine pyrophosphate anion to isochorismate to yield 2-succinyl-5-enolpyruvyl-6-hydroxy-3-cyclohexene-1-carboxylate (SEPHCHC). This is 2-succinyl-5-enolpyruvyl-6-hydroxy-3-cyclohexene-1-carboxylate synthase from Roseiflexus castenholzii (strain DSM 13941 / HLO8).